The following is a 414-amino-acid chain: GLABROUS1 enhancer-binding protein-like 3 (414 aa).

Disordered stretches follow at residues 36–57 (QLRT…LSSS) and 167–191 (QAKD…DRDV). Residues 38-50 (RTTTTRTTTTRTT) are compositionally biased toward low complexity. Positions 382-403 (LINEWKALFVDEQRLCVKKLTF) are non-canonical leucine-zipper.

It belongs to the GeBP family. As to quaternary structure, homo- and heterodimers. Interacts with GEBP, GPL1 and GPL2. Interacts with GEBP. Expressed in the apical meristem and young leaf primordia. Detected in the vascular tissues of rosette leaves, in primary and secondary roots and at the base of flowers and siliques.

It localises to the nucleus. Its function is as follows. Probable transcription factor. Involved in stress responses. Plays a repressive role in cell expansion by counteracting the positive role of CPR5 in this process, but does not regulate cell proliferation or endoreduplication. The protein is GLABROUS1 enhancer-binding protein-like 3 of Arabidopsis thaliana (Mouse-ear cress).